A 123-amino-acid chain; its full sequence is MRTQSLLLLGALLAVGSQLPAVFGRKKGEKSGGCPPDDGPCLLSVPDQCVEDSQCPLTRKCCYRACFRQCVPRVSVKLGSCPEDQLRCLSPMNHLCHKDSDCSGKKRCCHSACGRDCRDPARG.

Residues 1 to 24 (MRTQSLLLLGALLAVGSQLPAVFG) form the signal peptide. WAP domains lie at 27–73 (KGEK…CVPR) and 74–121 (VSVK…RDPA). Disulfide bonds link Cys-34/Cys-62, Cys-41/Cys-66, Cys-49/Cys-61, Cys-55/Cys-70, Cys-81/Cys-109, Cys-88/Cys-113, Cys-96/Cys-108, and Cys-102/Cys-117.

It localises to the secreted. In terms of biological role, putative acid-stable proteinase inhibitor. This chain is WAP four-disulfide core domain protein 5 (WFDC5), found in Pan troglodytes (Chimpanzee).